A 443-amino-acid polypeptide reads, in one-letter code: Xaa-Pro dipeptidase (443 aa).

The Mn(2+) site is built by Asp246, Asp257, His339, Glu384, and Glu423.

Belongs to the peptidase M24B family. Bacterial-type prolidase subfamily. The cofactor is Mn(2+).

The catalysed reaction is Xaa-L-Pro dipeptide + H2O = an L-alpha-amino acid + L-proline. Functionally, splits dipeptides with a prolyl residue in the C-terminal position. The sequence is that of Xaa-Pro dipeptidase from Salmonella choleraesuis (strain SC-B67).